The sequence spans 358 residues: DNA polymerase IV (358 aa).

One can recognise a UmuC domain in the interval 4-185; sequence IIHIDMDCYF…LSLRKIPGVG (182 aa). Mg(2+) contacts are provided by Asp8 and Asp103. The active site involves Glu104.

Belongs to the DNA polymerase type-Y family. As to quaternary structure, monomer. Mg(2+) is required as a cofactor.

The protein localises to the cytoplasm. The enzyme catalyses DNA(n) + a 2'-deoxyribonucleoside 5'-triphosphate = DNA(n+1) + diphosphate. In terms of biological role, poorly processive, error-prone DNA polymerase involved in untargeted mutagenesis. Copies undamaged DNA at stalled replication forks, which arise in vivo from mismatched or misaligned primer ends. These misaligned primers can be extended by PolIV. Exhibits no 3'-5' exonuclease (proofreading) activity. May be involved in translesional synthesis, in conjunction with the beta clamp from PolIII. This Shewanella baltica (strain OS155 / ATCC BAA-1091) protein is DNA polymerase IV.